Consider the following 336-residue polypeptide: Phosphate acyltransferase (336 aa).

It belongs to the PlsX family. Homodimer. Probably interacts with PlsY.

It localises to the cytoplasm. It carries out the reaction a fatty acyl-[ACP] + phosphate = an acyl phosphate + holo-[ACP]. Its pathway is lipid metabolism; phospholipid metabolism. Functionally, catalyzes the reversible formation of acyl-phosphate (acyl-PO(4)) from acyl-[acyl-carrier-protein] (acyl-ACP). This enzyme utilizes acyl-ACP as fatty acyl donor, but not acyl-CoA. This Pseudomonas putida (strain GB-1) protein is Phosphate acyltransferase.